The chain runs to 88 residues: Large ribosomal subunit protein bL31B (88 aa).

It belongs to the bacterial ribosomal protein bL31 family. Type B subfamily. As to quaternary structure, part of the 50S ribosomal subunit.

The chain is Large ribosomal subunit protein bL31B from Corynebacterium glutamicum (strain R).